The primary structure comprises 252 residues: Flap endonuclease Xni (252 aa).

Asp-105 is a Mg(2+) binding site. Residues Glu-162–Leu-250 form the 5'-3' exonuclease domain. Leu-172, Ala-173, Pro-181, Val-183, and Ile-186 together coordinate K(+). Residues Gly-185–Ser-190 form an interaction with DNA region.

It belongs to the Xni family. It depends on Mg(2+) as a cofactor. K(+) serves as cofactor.

Has flap endonuclease activity. During DNA replication, flap endonucleases cleave the 5'-overhanging flap structure that is generated by displacement synthesis when DNA polymerase encounters the 5'-end of a downstream Okazaki fragment. The polypeptide is Flap endonuclease Xni (Shewanella woodyi (strain ATCC 51908 / MS32)).